Reading from the N-terminus, the 853-residue chain is DNA mismatch repair protein MutS (853 aa).

614-621 (GPNMGGKS) is a binding site for ATP.

The protein belongs to the DNA mismatch repair MutS family.

This protein is involved in the repair of mismatches in DNA. It is possible that it carries out the mismatch recognition step. This protein has a weak ATPase activity. The sequence is that of DNA mismatch repair protein MutS from Escherichia coli (strain K12 / MC4100 / BW2952).